The following is a 100-amino-acid chain: Urease subunit gamma (100 aa).

It belongs to the urease gamma subunit family. Heterotrimer of UreA (gamma), UreB (beta) and UreC (alpha) subunits. Three heterotrimers associate to form the active enzyme.

It is found in the cytoplasm. It carries out the reaction urea + 2 H2O + H(+) = hydrogencarbonate + 2 NH4(+). It functions in the pathway nitrogen metabolism; urea degradation; CO(2) and NH(3) from urea (urease route): step 1/1. The protein is Urease subunit gamma of Acinetobacter baylyi (strain ATCC 33305 / BD413 / ADP1).